Here is a 191-residue protein sequence, read N- to C-terminus: Decorin-binding protein A (191 aa).

Positions 1-29 are cleaved as a signal peptide; the sequence is MIKCNNKTFNNLLKLTILVNLLISCGLTG.

This sequence belongs to the decorin-binding protein family.

Its function is as follows. Binds to decorin which may mediate the adherence of B.burgdorferi to collagen fibers in skin and other tissues. This is Decorin-binding protein A (dbpA) from Borreliella burgdorferi (strain ATCC 35210 / DSM 4680 / CIP 102532 / B31) (Borrelia burgdorferi).